Here is a 208-residue protein sequence, read N- to C-terminus: Small ribosomal subunit protein uS4 (208 aa).

The S4 RNA-binding domain occupies 98 to 166 (SRLDNVVYRM…VKEAIEASRN (69 aa)).

Belongs to the universal ribosomal protein uS4 family. In terms of assembly, part of the 30S ribosomal subunit. Contacts protein S5. The interaction surface between S4 and S5 is involved in control of translational fidelity.

One of the primary rRNA binding proteins, it binds directly to 16S rRNA where it nucleates assembly of the body of the 30S subunit. In terms of biological role, with S5 and S12 plays an important role in translational accuracy. The protein is Small ribosomal subunit protein uS4 of Kosmotoga olearia (strain ATCC BAA-1733 / DSM 21960 / TBF 19.5.1).